A 309-amino-acid polypeptide reads, in one-letter code: Acetylglutamate kinase (309 aa).

Residues glycine 82–glycine 83, arginine 104, and asparagine 206 each bind substrate.

It belongs to the acetylglutamate kinase family. ArgB subfamily.

The protein resides in the cytoplasm. The catalysed reaction is N-acetyl-L-glutamate + ATP = N-acetyl-L-glutamyl 5-phosphate + ADP. It participates in amino-acid biosynthesis; L-arginine biosynthesis; N(2)-acetyl-L-ornithine from L-glutamate: step 2/4. Functionally, catalyzes the ATP-dependent phosphorylation of N-acetyl-L-glutamate. In Cupriavidus metallidurans (strain ATCC 43123 / DSM 2839 / NBRC 102507 / CH34) (Ralstonia metallidurans), this protein is Acetylglutamate kinase.